Reading from the N-terminus, the 563-residue chain is E3 ubiquitin-protein ligase IpaH2.5 (563 aa).

The interaction with target proteins stretch occupies residues Met1–Phe270. LRR repeat units follow at residues Leu69 to Pro90, Pro91 to Val115, His117 to Pro130, Glu131 to Pro150, Glu151 to Pro170, Pro171 to Gly195, Ala197 to Leu209, and Pro210 to Leu233. A linker region spans residues Ser271–Pro281. Residues Glu282 to Ala563 are E3 ubiquitin-protein ligase catalytic domain. The region spanning Ser284 to Ala563 is the NEL domain. The Glycyl thioester intermediate role is filled by Cys368.

The protein belongs to the LRR-containing bacterial E3 ligase family. As to quaternary structure, interacts with human RBCK1/HOIL-1 and RNF31/HOIP components of the LUBAC complex. In terms of processing, ubiquitinated in the presence of host E1 ubiquitin-activating enzyme, E2 ubiquitin-conjugating enzyme and ubiquitin.

The protein resides in the secreted. The protein localises to the host cytoplasm. The enzyme catalyses S-ubiquitinyl-[E2 ubiquitin-conjugating enzyme]-L-cysteine + [acceptor protein]-L-lysine = [E2 ubiquitin-conjugating enzyme]-L-cysteine + N(6)-ubiquitinyl-[acceptor protein]-L-lysine.. Its pathway is protein modification; protein ubiquitination. Exists in an autoinhibited state in the absence of substrate protein, probably due to interactions of the leucine-rich repeat domain with the catalytic domain. Is activated upon binding to a substrate protein. Functionally, E3 ubiquitin-protein ligase effector that inhibits host cell innate immunity during bacterial infection by catalyzing 'Lys-48'-linked polyubiquitination and subsequent degradation of host RNF31/HOIP. Host RNF31/HOIP is the catalytic component of the LUBAC complex, which conjugates linear ('Met-1'-linked) polyubiquitin chains at the surface of bacteria invading the host cytosol to form the ubiquitin coat surrounding bacteria. The bacterial ubiquitin coat acts as an 'eat-me' signal for xenophagy and promotes NF-kappa-B activation. The protein is E3 ubiquitin-protein ligase IpaH2.5 of Shigella flexneri.